Consider the following 391-residue polypeptide: GATA-binding factor 6-B (391 aa).

Residues G57–T69 show a composition bias toward polar residues. The segment at G57 to S107 is disordered. Over residues S70–S89 the composition is skewed to low complexity. Over residues N96–S107 the composition is skewed to polar residues. 2 GATA-type zinc fingers span residues C182–C206 and C236–C260. The disordered stretch occupies residues K277–P334. Residues T282 to N291 show a composition bias toward basic residues. Residues K292–S319 are compositionally biased toward low complexity.

In embryos, expressed in the presumptive heart mesoderm. In adults, widely distributed but predominant in the heart.

It is found in the nucleus. Transcriptional activator that binds 5'-GATA-3'-containing motifs within gene promoters. Regulates cardiac-specific transcription during embryogenesis and thereby cardiogenesis. The polypeptide is GATA-binding factor 6-B (gata6-b) (Xenopus laevis (African clawed frog)).